Reading from the N-terminus, the 207-residue chain is Dephospho-CoA kinase (207 aa).

The DPCK domain occupies 10–207; that stretch reads ILGLTGGIGS…FYLTLRGGQS (198 aa). 18 to 23 is a binding site for ATP; sequence GSGKSA.

The protein belongs to the CoaE family.

Its subcellular location is the cytoplasm. It carries out the reaction 3'-dephospho-CoA + ATP = ADP + CoA + H(+). The protein operates within cofactor biosynthesis; coenzyme A biosynthesis; CoA from (R)-pantothenate: step 5/5. In terms of biological role, catalyzes the phosphorylation of the 3'-hydroxyl group of dephosphocoenzyme A to form coenzyme A. In Pseudomonas syringae pv. syringae (strain B728a), this protein is Dephospho-CoA kinase.